The primary structure comprises 207 residues: Large ribosomal subunit protein uL4 (207 aa).

The tract at residues 62–85 is disordered; that stretch reads KKPFKQKGTGQARQGCRRAPQYPG.

Belongs to the universal ribosomal protein uL4 family. In terms of assembly, part of the 50S ribosomal subunit.

In terms of biological role, one of the primary rRNA binding proteins, this protein initially binds near the 5'-end of the 23S rRNA. It is important during the early stages of 50S assembly. It makes multiple contacts with different domains of the 23S rRNA in the assembled 50S subunit and ribosome. Its function is as follows. Forms part of the polypeptide exit tunnel. The sequence is that of Large ribosomal subunit protein uL4 from Geobacter sp. (strain M21).